A 247-amino-acid chain; its full sequence is Probable dihydroorotate dehydrogenase B (NAD(+)), electron transfer subunit (247 aa).

One can recognise an FAD-binding FR-type domain in the interval 1-87; that stretch reads MLRRVMIKET…RGPYGNGFKS (87 aa). Positions 200, 205, 208, and 216 each coordinate [2Fe-2S] cluster.

This sequence belongs to the PyrK family. As to quaternary structure, heterotetramer of 2 PyrK and 2 PyrD type B subunits. It depends on [2Fe-2S] cluster as a cofactor. FAD serves as cofactor.

It functions in the pathway pyrimidine metabolism; UMP biosynthesis via de novo pathway; orotate from (S)-dihydroorotate (NAD(+) route): step 1/1. In terms of biological role, responsible for channeling the electrons from the oxidation of dihydroorotate from the FMN redox center in the PyrD type B subunit to the ultimate electron acceptor NAD(+). In Pyrococcus abyssi (strain GE5 / Orsay), this protein is Probable dihydroorotate dehydrogenase B (NAD(+)), electron transfer subunit.